Consider the following 193-residue polypeptide: Transforming protein RhoA (193 aa).

Residues glycine 12–threonine 19 and phenylalanine 30–threonine 37 contribute to the GTP site. Residues tyrosine 34–tyrosine 42 carry the Effector region motif. (Microbial infection) ADP-ribosylasparagine; by botulinum toxin is present on asparagine 41. GTP contacts are provided by residues aspartate 59–glutamine 63 and asparagine 117–aspartate 120. A switch II region; involved in RAP1GDS1 isoform 2 binding region spans residues alanine 61–aspartate 78. Glutamine 63 is subject to 5-glutamyl serotonin. Lysine 135 participates in a covalent cross-link: Glycyl lysine isopeptide (Lys-Gly) (interchain with G-Cter in ubiquitin). Residue serine 160–lysine 162 coordinates GTP. Residue serine 188 is modified to Phosphoserine; by PKG/PRKG1. At cysteine 190 the chain carries Cysteine methyl ester. Cysteine 190 is lipidated: S-geranylgeranyl cysteine. The propeptide at leucine 191–leucine 193 is removed in mature form.

This sequence belongs to the small GTPase superfamily. Rho family. In terms of assembly, interacts with ARHGEF28. Interacts (via GTP-bound form) with RIPOR1 (via N-terminus); this interaction links RHOA to STK24 and STK26 kinases. Interacts with RIPOR2 (via active GTP- or inactive GDP-bound forms) isoform 1 and isoform 2; these interactions are direct, block the loading of GTP to RHOA and decrease upon chemokine CCL19 stimulation in primary T lymphocytes. Binds PRKCL1, ROCK1 and ROCK2. Interacts with ARHGEF2, ARHGEF3, NET1 and RTKN. Interacts with PLCE1 and AKAP13. Interacts with DIAPH1. Interacts (in the constitutively activated, GTP-bound form) with DGKQ. Interacts with RACK1; enhances RHOA activation. Interacts with PKP4; the interaction is detected at the midbody. Interacts (GTP-bound form preferentially) with PKN2; the interaction stimulates autophosphorylation and phosphorylation of PKN2. Interacts with ARHGDIA; this interaction inactivates and stabilizes RHOA. Interacts with ARHGDIB. Interacts (GTP-bound form) with KCNA2 (via cytoplasmic N-terminal domain). Interacts (GTP-bound form) with ECT2; the interaction results in allosteric activation of ECT2. Interacts with RAP1GDS1; the interaction is direct and in a 1:1 stoichiometry. Requires Mg(2+) as cofactor. Phosphorylation by PRKG1 at Ser-188 inactivates RHOA signaling. Phosphorylation by SLK at Ser-188 in response to AGTR2 activation. In terms of processing, ubiquitinated by the BCR(KCTD13) and BCR(TNFAIP1) E3 ubiquitin ligase complexes, leading to its degradation by the proteasome, thereby regulating the actin cytoskeleton and synaptic transmission in neurons. Ubiquitinated at Lys-135 in a FBXL19-mediated manner; leading to proteasomal degradation. Post-translationally, serotonylation of Gln-63 by TGM2 during activation and aggregation of platelets leads to constitutive activation of GTPase activity.

The protein resides in the cell membrane. It is found in the cytoplasm. It localises to the cytoskeleton. The protein localises to the cleavage furrow. Its subcellular location is the cell cortex. The protein resides in the midbody. It is found in the cell projection. It localises to the lamellipodium. The protein localises to the dendrite. Its subcellular location is the nucleus. It carries out the reaction GTP + H2O = GDP + phosphate + H(+). Regulated by guanine nucleotide exchange factors (GEFs) which promote the exchange of bound GDP for free GTP, GTPase activating proteins (GAPs) which increase the GTP hydrolysis activity and GDP dissociation inhibitors which inhibit the dissociation of the nucleotide from the GTPase. Activated by GEFs such as ARHGEF2, ARHGEF3, ARHGEF28 and BCR. Inhibited by GAPs such as ARHGAP30. Inhibited by GDP dissociation inhibitors such as ARHGDIA. Functionally, small GTPase which cycles between an active GTP-bound and an inactive GDP-bound state. Mainly associated with cytoskeleton organization, in active state binds to a variety of effector proteins to regulate cellular responses such as cytoskeletal dynamics, cell migration and cell cycle. Regulates a signal transduction pathway linking plasma membrane receptors to the assembly of focal adhesions and actin stress fibers. Involved in a microtubule-dependent signal that is required for the myosin contractile ring formation during cell cycle cytokinesis. Plays an essential role in cleavage furrow formation. Required for the apical junction formation of keratinocyte cell-cell adhesion. Essential for the SPATA13-mediated regulation of cell migration and adhesion assembly and disassembly. The MEMO1-RHOA-DIAPH1 signaling pathway plays an important role in ERBB2-dependent stabilization of microtubules at the cell cortex. It controls the localization of APC and CLASP2 to the cell membrane, via the regulation of GSK3B activity. In turn, membrane-bound APC allows the localization of the MACF1 to the cell membrane, which is required for microtubule capture and stabilization. Regulates KCNA2 potassium channel activity by reducing its location at the cell surface in response to CHRM1 activation; promotes KCNA2 endocytosis. Acts as an allosteric activator of guanine nucleotide exchange factor ECT2 by binding in its activated GTP-bound form to the PH domain of ECT2 which stimulates the release of PH inhibition and promotes the binding of substrate RHOA to the ECT2 catalytic center. May be an activator of PLCE1. In neurons, involved in the inhibition of the initial spine growth. Upon activation by CaMKII, modulates dendritic spine structural plasticity by relaying CaMKII transient activation to synapse-specific, long-term signaling. Acts as a regulator of platelet alpha-granule release during activation and aggregation of platelets. When activated by DAAM1 may signal centrosome maturation and chromosomal segregation during cell division. May also be involved in contractile ring formation during cytokinesis. The chain is Transforming protein RhoA (RHOA) from Bos taurus (Bovine).